The chain runs to 203 residues: Serine hydrolase-like protein (203 aa).

The AB hydrolase-1 domain maps to 33-145 (PPVLCLHGWL…FLLESDEMEN (113 aa)). The active site involves Ser108.

It belongs to the AB hydrolase superfamily.

Its function is as follows. Putative serine hydrolase. The chain is Serine hydrolase-like protein (SERHL) from Homo sapiens (Human).